Consider the following 146-residue polypeptide: UPF0260 protein Sbal_1871 (146 aa).

Belongs to the UPF0260 family.

In Shewanella baltica (strain OS155 / ATCC BAA-1091), this protein is UPF0260 protein Sbal_1871.